The sequence spans 477 residues: Argininosuccinate lyase (477 aa).

The protein belongs to the lyase 1 family. Argininosuccinate lyase subfamily.

The protein resides in the cytoplasm. The enzyme catalyses 2-(N(omega)-L-arginino)succinate = fumarate + L-arginine. Its pathway is amino-acid biosynthesis; L-arginine biosynthesis; L-arginine from L-ornithine and carbamoyl phosphate: step 3/3. The protein is Argininosuccinate lyase of Acinetobacter baumannii (strain AB307-0294).